We begin with the raw amino-acid sequence, 500 residues long: Glycogen synthase (500 aa).

Lys15 lines the ADP-alpha-D-glucose pocket.

Belongs to the glycosyltransferase 1 family. Bacterial/plant glycogen synthase subfamily.

It carries out the reaction [(1-&gt;4)-alpha-D-glucosyl](n) + ADP-alpha-D-glucose = [(1-&gt;4)-alpha-D-glucosyl](n+1) + ADP + H(+). The protein operates within glycan biosynthesis; glycogen biosynthesis. Synthesizes alpha-1,4-glucan chains using ADP-glucose. In Protochlamydia amoebophila (strain UWE25), this protein is Glycogen synthase.